We begin with the raw amino-acid sequence, 104 residues long: Zinc finger C2H2 protein ECU02_0310 (104 aa).

The C2H2-type zinc-finger motif lies at 56-80 (FYCCECDRHFITEKVLMEHKRSNPH).

It belongs to the ZNF593/BUD20 C2H2-type zinc-finger protein family. Associates with pre-60S ribosomal particles; released from the pre-60S particle very early in the cytoplasm.

The protein resides in the nucleus. Its subcellular location is the cytoplasm. Functionally, involved in pre-60S ribosomal particles maturation by promoting the nuclear export of the 60S ribosome. The protein is Zinc finger C2H2 protein ECU02_0310 of Encephalitozoon cuniculi (strain GB-M1) (Microsporidian parasite).